A 135-amino-acid polypeptide reads, in one-letter code: Large ribosomal subunit protein eL32 (135 aa).

It belongs to the eukaryotic ribosomal protein eL32 family. As to quaternary structure, component of the large ribosomal subunit.

The protein localises to the cytoplasm. In terms of biological role, component of the large ribosomal subunit. The ribosome is a large ribonucleoprotein complex responsible for the synthesis of proteins in the cell. The protein is Large ribosomal subunit protein eL32 (rpl32) of Ictalurus punctatus (Channel catfish).